A 163-amino-acid chain; its full sequence is NADH-quinone oxidoreductase subunit I (163 aa).

2 4Fe-4S ferredoxin-type domains span residues 53 to 83 and 94 to 123; these read LRRY…IEAG and TLYD…LTPE. Cysteine 63, cysteine 66, cysteine 69, cysteine 73, cysteine 103, cysteine 106, cysteine 109, and cysteine 113 together coordinate [4Fe-4S] cluster.

The protein belongs to the complex I 23 kDa subunit family. NDH-1 is composed of 14 different subunits. Subunits NuoA, H, J, K, L, M, N constitute the membrane sector of the complex. The cofactor is [4Fe-4S] cluster.

It is found in the cell inner membrane. The catalysed reaction is a quinone + NADH + 5 H(+)(in) = a quinol + NAD(+) + 4 H(+)(out). In terms of biological role, NDH-1 shuttles electrons from NADH, via FMN and iron-sulfur (Fe-S) centers, to quinones in the respiratory chain. The immediate electron acceptor for the enzyme in this species is believed to be ubiquinone. Couples the redox reaction to proton translocation (for every two electrons transferred, four hydrogen ions are translocated across the cytoplasmic membrane), and thus conserves the redox energy in a proton gradient. This Coxiella burnetii (strain Dugway 5J108-111) protein is NADH-quinone oxidoreductase subunit I.